The sequence spans 429 residues: Serine hydroxymethyltransferase (429 aa).

Residues Leu126 and 130 to 132 (GHL) each bind (6S)-5,6,7,8-tetrahydrofolate. At Lys235 the chain carries N6-(pyridoxal phosphate)lysine. A (6S)-5,6,7,8-tetrahydrofolate-binding site is contributed by 359–361 (SPF).

Belongs to the SHMT family. Homodimer. Pyridoxal 5'-phosphate is required as a cofactor.

It is found in the cytoplasm. It carries out the reaction (6R)-5,10-methylene-5,6,7,8-tetrahydrofolate + glycine + H2O = (6S)-5,6,7,8-tetrahydrofolate + L-serine. Its pathway is one-carbon metabolism; tetrahydrofolate interconversion. The protein operates within amino-acid biosynthesis; glycine biosynthesis; glycine from L-serine: step 1/1. Catalyzes the reversible interconversion of serine and glycine with tetrahydrofolate (THF) serving as the one-carbon carrier. This reaction serves as the major source of one-carbon groups required for the biosynthesis of purines, thymidylate, methionine, and other important biomolecules. Also exhibits THF-independent aldolase activity toward beta-hydroxyamino acids, producing glycine and aldehydes, via a retro-aldol mechanism. This chain is Serine hydroxymethyltransferase, found in Synechococcus sp. (strain CC9311).